Here is an 81-residue protein sequence, read N- to C-terminus: Extracellular matrix regulatory protein B (81 aa).

Its function is as follows. Regulates the biosynthesis of the extracellular matrix and the biofilm formation. May act as an enhancer of biofilm gene expression. Acts in parallel to the pathway that governs SinR derepression. The sequence is that of Extracellular matrix regulatory protein B from Bacillus subtilis (strain 168).